Here is a 178-residue protein sequence, read N- to C-terminus: ATP synthase subunit delta (178 aa).

This sequence belongs to the ATPase delta chain family. In terms of assembly, F-type ATPases have 2 components, F(1) - the catalytic core - and F(0) - the membrane proton channel. F(1) has five subunits: alpha(3), beta(3), gamma(1), delta(1), epsilon(1). F(0) has three main subunits: a(1), b(2) and c(10-14). The alpha and beta chains form an alternating ring which encloses part of the gamma chain. F(1) is attached to F(0) by a central stalk formed by the gamma and epsilon chains, while a peripheral stalk is formed by the delta and b chains.

Its subcellular location is the cell inner membrane. F(1)F(0) ATP synthase produces ATP from ADP in the presence of a proton or sodium gradient. F-type ATPases consist of two structural domains, F(1) containing the extramembraneous catalytic core and F(0) containing the membrane proton channel, linked together by a central stalk and a peripheral stalk. During catalysis, ATP synthesis in the catalytic domain of F(1) is coupled via a rotary mechanism of the central stalk subunits to proton translocation. Functionally, this protein is part of the stalk that links CF(0) to CF(1). It either transmits conformational changes from CF(0) to CF(1) or is implicated in proton conduction. This chain is ATP synthase subunit delta, found in Chromohalobacter salexigens (strain ATCC BAA-138 / DSM 3043 / CIP 106854 / NCIMB 13768 / 1H11).